The sequence spans 197 residues: Imidazoleglycerol-phosphate dehydratase (197 aa).

The protein belongs to the imidazoleglycerol-phosphate dehydratase family.

The protein resides in the cytoplasm. The enzyme catalyses D-erythro-1-(imidazol-4-yl)glycerol 3-phosphate = 3-(imidazol-4-yl)-2-oxopropyl phosphate + H2O. It participates in amino-acid biosynthesis; L-histidine biosynthesis; L-histidine from 5-phospho-alpha-D-ribose 1-diphosphate: step 6/9. In Thermobifida fusca (strain YX), this protein is Imidazoleglycerol-phosphate dehydratase.